Here is a 302-residue protein sequence, read N- to C-terminus: Light-independent protochlorophyllide reductase iron-sulfur ATP-binding protein (302 aa).

The span at 1 to 10 (MSTATISPSQ) shows a compositional bias: polar residues. Residues 1-21 (MSTATISPSQIGRGARPDGEG) are disordered. Residues 46–51 (GIGKST) and Lys75 each bind ATP. A Mg(2+)-binding site is contributed by Ser50. Residues Cys131 and Cys165 each coordinate [4Fe-4S] cluster. Residues 216–217 (NR) and 240–242 (PAL) contribute to the ATP site.

Belongs to the NifH/BchL/ChlL family. Homodimer. Protochlorophyllide reductase is composed of three subunits; BchL, BchN and BchB. [4Fe-4S] cluster serves as cofactor.

The enzyme catalyses chlorophyllide a + oxidized 2[4Fe-4S]-[ferredoxin] + 2 ADP + 2 phosphate = protochlorophyllide a + reduced 2[4Fe-4S]-[ferredoxin] + 2 ATP + 2 H2O. It functions in the pathway porphyrin-containing compound metabolism; bacteriochlorophyll biosynthesis (light-independent). Its function is as follows. Component of the dark-operative protochlorophyllide reductase (DPOR) that uses Mg-ATP and reduced ferredoxin to reduce ring D of protochlorophyllide (Pchlide) to form chlorophyllide a (Chlide). This reaction is light-independent. The L component serves as a unique electron donor to the NB-component of the complex, and binds Mg-ATP. This chain is Light-independent protochlorophyllide reductase iron-sulfur ATP-binding protein, found in Rubrivivax gelatinosus (strain NBRC 100245 / IL144).